We begin with the raw amino-acid sequence, 182 residues long: Ribosome maturation factor RimM (182 aa).

In terms of domain architecture, PRC barrel spans 103-182 (EDEFYWRELF…RIEVDWDPGF (80 aa)).

Belongs to the RimM family. As to quaternary structure, binds ribosomal protein uS19.

The protein localises to the cytoplasm. Its function is as follows. An accessory protein needed during the final step in the assembly of 30S ribosomal subunit, possibly for assembly of the head region. Essential for efficient processing of 16S rRNA. May be needed both before and after RbfA during the maturation of 16S rRNA. It has affinity for free ribosomal 30S subunits but not for 70S ribosomes. The sequence is that of Ribosome maturation factor RimM from Vibrio parahaemolyticus serotype O3:K6 (strain RIMD 2210633).